Consider the following 369-residue polypeptide: tRNA 2-selenouridine synthase (369 aa).

In terms of domain architecture, Rhodanese spans 12 to 136 (FLDDIPLMDV…LRNFLFETTR (125 aa)). The active-site S-selanylcysteine intermediate is cysteine 95.

It belongs to the SelU family. Monomer.

It catalyses the reaction 5-methylaminomethyl-2-thiouridine(34) in tRNA + selenophosphate + (2E)-geranyl diphosphate + H2O + H(+) = 5-methylaminomethyl-2-selenouridine(34) in tRNA + (2E)-thiogeraniol + phosphate + diphosphate. The enzyme catalyses 5-methylaminomethyl-2-thiouridine(34) in tRNA + (2E)-geranyl diphosphate = 5-methylaminomethyl-S-(2E)-geranyl-thiouridine(34) in tRNA + diphosphate. The catalysed reaction is 5-methylaminomethyl-S-(2E)-geranyl-thiouridine(34) in tRNA + selenophosphate + H(+) = 5-methylaminomethyl-2-(Se-phospho)selenouridine(34) in tRNA + (2E)-thiogeraniol. It carries out the reaction 5-methylaminomethyl-2-(Se-phospho)selenouridine(34) in tRNA + H2O = 5-methylaminomethyl-2-selenouridine(34) in tRNA + phosphate. In terms of biological role, involved in the post-transcriptional modification of the uridine at the wobble position (U34) of tRNA(Lys), tRNA(Glu) and tRNA(Gln). Catalyzes the conversion of 2-thiouridine (S2U-RNA) to 2-selenouridine (Se2U-RNA). Acts in a two-step process involving geranylation of 2-thiouridine (S2U) to S-geranyl-2-thiouridine (geS2U) and subsequent selenation of the latter derivative to 2-selenouridine (Se2U) in the tRNA chain. In Pseudomonas aeruginosa (strain LESB58), this protein is tRNA 2-selenouridine synthase.